The chain runs to 543 residues: CTP synthase (543 aa).

Residues 1-265 are amidoligase domain; that stretch reads MTRFIFVTGG…DQIVLDKFGL (265 aa). S13 contributes to the CTP binding site. Residue S13 participates in UTP binding. ATP is bound by residues 14–19 and D71; that span reads SLGKGI. Mg(2+) is bound by residues D71 and E139. CTP is bound by residues 146-148, 186-191, and K222; these read DIE and KTKPTQ. Residues 186–191 and K222 contribute to the UTP site; that span reads KTKPTQ. The region spanning 290-541 is the Glutamine amidotransferase type-1 domain; sequence TIAMVGKYMD…IQAAVEQNER (252 aa). G351 provides a ligand contact to L-glutamine. C378 serves as the catalytic Nucleophile; for glutamine hydrolysis. Residues 379–382, E402, and R469 each bind L-glutamine; that span reads LGMQ. Residues H514 and E516 contribute to the active site.

Belongs to the CTP synthase family. Homotetramer.

The enzyme catalyses UTP + L-glutamine + ATP + H2O = CTP + L-glutamate + ADP + phosphate + 2 H(+). The catalysed reaction is L-glutamine + H2O = L-glutamate + NH4(+). It catalyses the reaction UTP + NH4(+) + ATP = CTP + ADP + phosphate + 2 H(+). It participates in pyrimidine metabolism; CTP biosynthesis via de novo pathway; CTP from UDP: step 2/2. Allosterically activated by GTP, when glutamine is the substrate; GTP has no effect on the reaction when ammonia is the substrate. The allosteric effector GTP functions by stabilizing the protein conformation that binds the tetrahedral intermediate(s) formed during glutamine hydrolysis. Inhibited by the product CTP, via allosteric rather than competitive inhibition. Functionally, catalyzes the ATP-dependent amination of UTP to CTP with either L-glutamine or ammonia as the source of nitrogen. Regulates intracellular CTP levels through interactions with the four ribonucleotide triphosphates. This chain is CTP synthase, found in Saccharophagus degradans (strain 2-40 / ATCC 43961 / DSM 17024).